The chain runs to 165 residues: Ribosome maturation factor RimM (165 aa).

The region spanning 89–161 (EADTHYVVDL…KIVIKPVRQW (73 aa)) is the PRC barrel domain.

The protein belongs to the RimM family. In terms of assembly, binds ribosomal protein uS19.

It is found in the cytoplasm. Functionally, an accessory protein needed during the final step in the assembly of 30S ribosomal subunit, possibly for assembly of the head region. Essential for efficient processing of 16S rRNA. May be needed both before and after RbfA during the maturation of 16S rRNA. It has affinity for free ribosomal 30S subunits but not for 70S ribosomes. The chain is Ribosome maturation factor RimM from Clostridium botulinum (strain Eklund 17B / Type B).